Consider the following 316-residue polypeptide: 4-amino-5-hydroxymethyl-2-methylpyrimidine phosphate synthase (316 aa).

Residue K66 is modified to N6-(pyridoxal phosphate)lysine. Residue H70 is part of the active site. 118 to 121 (GEFG) serves as a coordination point for pyridoxal 5'-phosphate. A CCCFC; essential for catalytic activity, may be the site of iron coordination motif is present at residues 191 to 195 (CCCFC).

Belongs to the NMT1/THI5 family. In terms of assembly, homodimer. Fe cation is required as a cofactor.

It catalyses the reaction N(6)-(pyridoxal phosphate)-L-lysyl-[4-amino-5-hydroxymethyl-2-methylpyrimidine phosphate synthase] + L-histidyl-[4-amino-5-hydroxymethyl-2-methylpyrimidine phosphate synthase] + 2 Fe(3+) + 4 H2O = L-lysyl-[4-amino-5-hydroxymethyl-2-methylpyrimidine phosphate synthase] + (2S)-2-amino-5-hydroxy-4-oxopentanoyl-[4-amino-5-hydroxymethyl-2-methylpyrimidine phosphate synthase] + 4-amino-2-methyl-5-(phosphooxymethyl)pyrimidine + 3-oxopropanoate + 2 Fe(2+) + 2 H(+). Its pathway is cofactor biosynthesis; thiamine diphosphate biosynthesis. In terms of biological role, responsible for the formation of the pyrimidine heterocycle in the thiamine biosynthesis pathway. Catalyzes the formation of hydroxymethylpyrimidine phosphate (HMP-P) from histidine and pyridoxal phosphate (PLP). The protein uses PLP and the active site histidine to form HMP-P, generating an inactive enzyme. The enzyme can only undergo a single turnover, which suggests it is a suicide enzyme. The polypeptide is 4-amino-5-hydroxymethyl-2-methylpyrimidine phosphate synthase (Legionella pneumophila subsp. pneumophila (strain Philadelphia 1 / ATCC 33152 / DSM 7513)).